A 369-amino-acid polypeptide reads, in one-letter code: uncharacterized protein (369 aa).

This is an uncharacterized protein from Archaeoglobus fulgidus (strain ATCC 49558 / DSM 4304 / JCM 9628 / NBRC 100126 / VC-16).